The chain runs to 160 residues: Ribonuclease H (160 aa).

In terms of domain architecture, RNase H type-1 spans 1-157; sequence MNIEIYTDGA…CDRLAVEACQ (157 aa). 4 residues coordinate Mg(2+): aspartate 8, glutamate 49, aspartate 85, and aspartate 149.

It belongs to the RNase H family. As to quaternary structure, monomer. Mg(2+) serves as cofactor.

The protein localises to the cytoplasm. The enzyme catalyses Endonucleolytic cleavage to 5'-phosphomonoester.. Its function is as follows. Endonuclease that specifically degrades the RNA of RNA-DNA hybrids. The sequence is that of Ribonuclease H from Treponema denticola (strain ATCC 35405 / DSM 14222 / CIP 103919 / JCM 8153 / KCTC 15104).